The primary structure comprises 535 residues: T-complex protein 1 subunit epsilon (535 aa).

Belongs to the TCP-1 chaperonin family. In terms of assembly, heterooligomeric complex of about 850 to 900 kDa that forms two stacked rings, 12 to 16 nm in diameter.

Its subcellular location is the cytoplasm. In terms of biological role, molecular chaperone; assists the folding of proteins upon ATP hydrolysis. Known to play a role, in vitro, in the folding of actin and tubulin. This chain is T-complex protein 1 subunit epsilon, found in Arabidopsis thaliana (Mouse-ear cress).